A 650-amino-acid chain; its full sequence is DNA ligase (650 aa).

NAD(+) is bound by residues 30–34 (DEEYD), 79–80 (SL), and Asp-108. Lys-110 functions as the N6-AMP-lysine intermediate in the catalytic mechanism. NAD(+)-binding residues include Arg-131, Glu-165, and Lys-304. Zn(2+)-binding residues include Cys-398, Cys-401, Cys-414, and Cys-419. The BRCT domain occupies 573–650 (PQDSPIAGKS…EEELGEILES (78 aa)).

Belongs to the NAD-dependent DNA ligase family. LigA subfamily. It depends on Mg(2+) as a cofactor. Mn(2+) serves as cofactor.

It carries out the reaction NAD(+) + (deoxyribonucleotide)n-3'-hydroxyl + 5'-phospho-(deoxyribonucleotide)m = (deoxyribonucleotide)n+m + AMP + beta-nicotinamide D-nucleotide.. Its function is as follows. DNA ligase that catalyzes the formation of phosphodiester linkages between 5'-phosphoryl and 3'-hydroxyl groups in double-stranded DNA using NAD as a coenzyme and as the energy source for the reaction. It is essential for DNA replication and repair of damaged DNA. The chain is DNA ligase from Wolinella succinogenes (strain ATCC 29543 / DSM 1740 / CCUG 13145 / JCM 31913 / LMG 7466 / NCTC 11488 / FDC 602W) (Vibrio succinogenes).